The sequence spans 232 residues: 2-C-methyl-D-erythritol 4-phosphate cytidylyltransferase (232 aa).

It belongs to the IspD/TarI cytidylyltransferase family. IspD subfamily.

It carries out the reaction 2-C-methyl-D-erythritol 4-phosphate + CTP + H(+) = 4-CDP-2-C-methyl-D-erythritol + diphosphate. It functions in the pathway isoprenoid biosynthesis; isopentenyl diphosphate biosynthesis via DXP pathway; isopentenyl diphosphate from 1-deoxy-D-xylulose 5-phosphate: step 2/6. Functionally, catalyzes the formation of 4-diphosphocytidyl-2-C-methyl-D-erythritol from CTP and 2-C-methyl-D-erythritol 4-phosphate (MEP). This Synechococcus elongatus (strain ATCC 33912 / PCC 7942 / FACHB-805) (Anacystis nidulans R2) protein is 2-C-methyl-D-erythritol 4-phosphate cytidylyltransferase.